We begin with the raw amino-acid sequence, 288 residues long: RELT-like protein 1 (288 aa).

The N-terminal stretch at 1 to 23 (MAPPAASGIPSIAPSLGPTAVWL) is a signal peptide. The Extracellular segment spans residues 24–57 (GNRSDLGDVQALASRDLPTTTVTAGNNNKPEHLE). N-linked (GlcNAc...) asparagine glycosylation is present at Asn-25. Residues 58 to 78 (YVAFVLVPVFFIMGLLGILIC) form a helical membrane-spanning segment. Residues 79–288 (HVLKKKGYRC…EGTQERRSSE (210 aa)) lie on the Cytoplasmic side of the membrane. Disordered regions lie at residues 145–172 (FEPE…GAAS) and 237–288 (HKSN…RSSE). The span at 152–172 (SPNAPGSPTSPGSPLSPGAAS) shows a compositional bias: low complexity. Basic and acidic residues predominate over residues 237–246 (HKSNSKERKS).

Belongs to the RELT family.

It localises to the cell membrane. The chain is RELT-like protein 1 (RELL1) from Gallus gallus (Chicken).